Here is a 589-residue protein sequence, read N- to C-terminus: Coiled-coil domain-containing protein 22 homolog (589 aa).

Coiled coils occupy residues 287–426 and 523–589; these read KTPL…LQTK and CEEL…TSRQ. Residues 568-589 are disordered; that stretch reads EMQNESQRLEESIRRMEVTSRQ. Over residues 574–589 the composition is skewed to basic and acidic residues; sequence QRLEESIRRMEVTSRQ.

The protein belongs to the CCDC22 family.

The protein is Coiled-coil domain-containing protein 22 homolog of Aedes aegypti (Yellowfever mosquito).